Reading from the N-terminus, the 751-residue chain is Lysine decarboxylase LdcA (751 aa).

This sequence belongs to the Orn/Lys/Arg decarboxylase class-I family. Homodecamer.

The catalysed reaction is L-lysine + H(+) = cadaverine + CO2. Functionally, plays an essential role in lysine utilization by acting as a lysine decarboxylase. This chain is Lysine decarboxylase LdcA, found in Pseudomonas aeruginosa (strain ATCC 15692 / DSM 22644 / CIP 104116 / JCM 14847 / LMG 12228 / 1C / PRS 101 / PAO1).